Consider the following 368-residue polypeptide: tRNA-specific 2-thiouridylase MnmA (368 aa).

ATP-binding positions include 11 to 18 and M37; that span reads GMSGGVDS. Residues 97 to 99 are interaction with target base in tRNA; sequence NPD. The Nucleophile role is filled by C102. A disulfide bridge connects residues C102 and C199. Position 127 (G127) interacts with ATP. Residues 149–151 form an interaction with tRNA region; the sequence is KDQ. The active-site Cysteine persulfide intermediate is the C199. An interaction with tRNA region spans residues 311 to 312; it reads RY.

This sequence belongs to the MnmA/TRMU family. As to quaternary structure, interacts with TusE.

Its subcellular location is the cytoplasm. It carries out the reaction S-sulfanyl-L-cysteinyl-[protein] + uridine(34) in tRNA + AH2 + ATP = 2-thiouridine(34) in tRNA + L-cysteinyl-[protein] + A + AMP + diphosphate + H(+). Functionally, catalyzes the 2-thiolation of uridine at the wobble position (U34) of tRNA(Lys), tRNA(Glu) and tRNA(Gln), leading to the formation of s(2)U34, the first step of tRNA-mnm(5)s(2)U34 synthesis. Sulfur is provided by IscS, via a sulfur-relay system. Binds ATP and its substrate tRNAs. In Shigella dysenteriae serotype 1 (strain Sd197), this protein is tRNA-specific 2-thiouridylase MnmA.